The following is a 1028-amino-acid chain: GPI inositol-deacylase (1028 aa).

A helical membrane pass occupies residues 51 to 71 (VFGLGLLLFCIVCMAYLSPFL). Asn-166 carries N-linked (GlcNAc...) asparagine glycosylation. Ser-231 is a catalytic residue. 4 N-linked (GlcNAc...) asparagine glycosylation sites follow: Asn-299, Asn-530, Asn-586, and Asn-679. 8 consecutive transmembrane segments (helical) span residues 699 to 719 (LAVA…QFAL), 740 to 760 (FWLK…ISFI), 799 to 819 (WIGP…AFGI), 867 to 887 (IMIL…LLFL), 915 to 935 (SYLL…FVFL), 948 to 968 (SHHN…NAGL), 979 to 999 (ISKL…VIYG), and 1002 to 1022 (NLFW…FTSL).

This sequence belongs to the GPI inositol-deacylase family.

It is found in the endoplasmic reticulum membrane. Involved in inositol deacylation of GPI-anchored proteins which plays important roles in the quality control and ER-associated degradation of GPI-anchored proteins. This is GPI inositol-deacylase (BST1) from Eremothecium gossypii (strain ATCC 10895 / CBS 109.51 / FGSC 9923 / NRRL Y-1056) (Yeast).